A 225-amino-acid chain; its full sequence is PKHD-type hydroxylase HEAR3399 (225 aa).

The Fe2OG dioxygenase domain maps to 77 to 177 (RYMPPLFNRY…RVCSFFWLQS (101 aa)). 3 residues coordinate Fe cation: His95, Asp97, and His158. Residue Arg168 coordinates 2-oxoglutarate.

Fe(2+) is required as a cofactor. The cofactor is L-ascorbate.

The sequence is that of PKHD-type hydroxylase HEAR3399 from Herminiimonas arsenicoxydans.